The following is a 381-amino-acid chain: Chymosin (381 aa).

Positions 1 to 16 (MRGFVVLLAVFALSQA) are cleaved as a signal peptide. Positions 17–58 (SGIVRIPLHKGKSLRRALKERGLLEDFLKNHQHAVSRKHSNS) are cleaved as a propeptide — activation peptide. A Peptidase A1 domain is found at 74–378 (YFGKIYIGTP…DRASNLVGLA (305 aa)). The active site involves Asp92. The stretch at 92–102 (DTGSSDLWVPS) is repeat 1. Cystine bridges form between Cys105–Cys110 and Cys265–Cys269. Residue Asp274 is part of the active site. Residues 274-284 (DTGTSMLVGPG) form repeat 2. A disulfide bridge connects residues Cys308 and Cys341.

Belongs to the peptidase A1 family. In terms of assembly, monomer.

It carries out the reaction Broad specificity similar to that of pepsin A. Clots milk by cleavage of a single 104-Ser-Phe-|-Met-Ala-107 bond in kappa-chain of casein.. Inhibited by pepstatin. Hydrolyzes a variety of proteins. This is Chymosin (CYM) from Callithrix jacchus (White-tufted-ear marmoset).